The sequence spans 225 residues: uncharacterized protein (225 aa).

This is an uncharacterized protein from Bacillus subtilis (strain 168).